The chain runs to 760 residues: Colleterpenol synthase (760 aa).

A terpene cyclase region spans residues 14–335 (ASSGLRSKFR…YTRRYPSKAD (322 aa)). Residue D95 participates in Mg(2+) binding. A DDXXD 1 motif is present at residues 95-99 (DDYYD). Residues 233 to 241 (NDLYSWPKE) carry the NSE/DTE motif. Residues 336–759 (LRQPEVEFVD…LELVLRRLWI (424 aa)) are prenyltransferase. Residues 359-400 (EEKVVSESVESLPTTEVEDEFSSSDASPGSVDQAISTPPSTT) are disordered. Over residues 391-400 (QAISTPPSTT) the composition is skewed to polar residues. K477, R480, and H509 together coordinate isopentenyl diphosphate. Residues D516 and D520 each coordinate Mg(2+). Residues 516 to 520 (DDIED) carry the DDXXD 2 motif. Position 525 (R525) interacts with dimethylallyl diphosphate. R526 provides a ligand contact to isopentenyl diphosphate. Positions 605, 606, 643, 650, 660, and 670 each coordinate dimethylallyl diphosphate.

In the N-terminal section; belongs to the terpene synthase family. It in the C-terminal section; belongs to the FPP/GGPP synthase family. Hexamer. It depends on Mg(2+) as a cofactor.

The catalysed reaction is 5 isopentenyl diphosphate + dimethylallyl diphosphate = all-trans-hexaprenyl diphosphate + 5 diphosphate. It catalyses the reaction all-trans-hexaprenyl diphosphate + H2O = colleterpenol + diphosphate. Its function is as follows. Bifunctional terpene synthase that converts dimethylallyl diphosphate (DMAPP) and isopentenyl diphosphate (IPP) into colleterpenol as a single product. The C-terminal prenyltransferase (PT) domain of CgCS catalyzes formation of hexaprenyl diphosphate (HexPP), whereas the N-terminal terpene cyclase (TC) domain catalyzes the cyclization of HexPP to colleterpenol. This chain is Colleterpenol synthase, found in Colletotrichum gloeosporioides (Anthracnose fungus).